A 663-amino-acid chain; its full sequence is Transketolase 2 (663 aa).

H25 contacts substrate. Thiamine diphosphate-binding positions include H65 and 113–115 (GPL). D154 lines the Mg(2+) pocket. The thiamine diphosphate site is built by G155 and N184. Positions 184 and 186 each coordinate Mg(2+). Substrate contacts are provided by H259, R356, and S383. H259 contributes to the thiamine diphosphate binding site. Catalysis depends on E410, which acts as the Proton donor. F436 lines the thiamine diphosphate pocket. H460, D468, and R519 together coordinate substrate.

Belongs to the transketolase family. As to quaternary structure, homodimer. The cofactor is Mg(2+). Ca(2+) serves as cofactor. It depends on Mn(2+) as a cofactor. Requires Co(2+) as cofactor. Thiamine diphosphate is required as a cofactor.

The catalysed reaction is D-sedoheptulose 7-phosphate + D-glyceraldehyde 3-phosphate = aldehydo-D-ribose 5-phosphate + D-xylulose 5-phosphate. Its function is as follows. Catalyzes the transfer of a two-carbon ketol group from a ketose donor to an aldose acceptor, via a covalent intermediate with the cofactor thiamine pyrophosphate. This Vibrio parahaemolyticus serotype O3:K6 (strain RIMD 2210633) protein is Transketolase 2 (tkt2).